A 2124-amino-acid polypeptide reads, in one-letter code: Genome polyprotein (2124 aa).

Residue G2 is the site of N-myristoyl glycine; by host attachment. Positions 873–880 (VARDLLLI) are host EIF4E binding. The SF3 helicase domain occupies 1102–1264 (VQIATYFRNF…SAATKNGKLD (163 aa)). Residue 1130-1137 (GKPGVGKS) coordinates ATP. Basic and acidic residues predominate over residues 1415-1437 (DKPKEEEEEPEEKKEKKTEESKE). The segment at 1415–1446 (DKPKEEEEEPEEKKEKKTEESKEAAGPYNGPT) is disordered. Y1442 is subject to O-(5'-phospho-RNA)-tyrosine. A Peptidase C3 domain is found at 1459-1648 (SPLMDMEKKI…VGTRLTARMI (190 aa)). Active-site for protease 3C activity residues include H1501, D1535, and C1612. In terms of domain architecture, RdRp catalytic spans 1893 to 2011 (PYLYDFDYSN…ASKFELDLVM (119 aa)). Catalysis depends on for RdRp activity residues D1899 and D1997.

Belongs to the picornaviruses polyprotein family. In terms of assembly, interacts with host EIF4E. Interacts with host IFIH1/MDA5; this interaction inhibits the induction of the IFN-beta signal pathway. Specific enzymatic cleavages by the viral protease in vivo yield a variety of precursors and mature proteins. The polyprotein seems to be cotranslationally cleaved at the 2A/2B junction by a ribosomal skip from one codon to the next without formation of a peptide bond. This process would release the P1-2A peptide from the translational complex. Post-translationally, during virion maturation, immature virions are rendered infectious following cleavage of VP0 into VP4 and VP2. This maturation seems to be an autocatalytic event triggered by the presence of RNA in the capsid and is followed by a conformational change of the particle. In terms of processing, myristoylation is required during RNA encapsidation and formation of the mature virus particle. Uridylylated by the polymerase and is covalently linked to the 5'-end of genomic RNA. This uridylylated form acts as a nucleotide-peptide primer for the polymerase.

It localises to the virion. The protein localises to the host cytoplasm. It is found in the host nucleus. Its subcellular location is the host nucleolus. The protein resides in the host cytoplasmic vesicle membrane. It catalyses the reaction RNA(n) + a ribonucleoside 5'-triphosphate = RNA(n+1) + diphosphate. It carries out the reaction ATP + H2O = ADP + phosphate + H(+). The enzyme catalyses Selective cleavage of Gln-|-Gly bond in the poliovirus polyprotein. In other picornavirus reactions Glu may be substituted for Gln, and Ser or Thr for Gly.. Its function is as follows. Forms an icosahedral capsid of pseudo T=3 symmetry with capsid proteins VP2 and VP3. Together they form an icosahedral capsid composed of 60 copies of each VP1, VP2, and VP3, with a diameter of approximately 300 Angstroms. VP4 lies on the inner surface of the protein shell formed by VP1, VP2 and VP3. All the three latter proteins contain a beta-sheet structure called beta-barrel jelly roll. VP1 is situated at the 12 fivefold axes, whereas VP2 and VP3 are located at the quasi-sixfold axes. In terms of biological role, lies on the inner surface of the capsid shell. After binding to the host receptor, the capsid undergoes conformational changes. Capsid protein VP4 is released, capsid protein VP1 N-terminus is externalized, and together, they shape a pore in the host membrane through which the viral genome is translocated into the host cell cytoplasm. After genome has been released, the channel shrinks. VP0 precursor is a component of immature procapsids. Functionally, involved in host translation shutoff by inhibiting cap-dependent mRNA translation. Nuclear localization is required for this function. The resulting inhibition of cellular protein synthesis serves to ensure maximal viral gene expression and to evade host immune response. Its function is as follows. Affects membrane integrity and causes an increase in membrane permeability. In terms of biological role, associates with and induces structural rearrangements of intracellular membranes. It displays RNA-binding, nucleotide binding and NTPase activities. Interacts with IFIH1/MDA5 to inhibit the induction of the IFN-beta signal pathway. Serves as membrane anchor via its hydrophobic domain. Functionally, forms a primer, VPg-pU, which is utilized by the polymerase for the initiation of RNA chains. Its function is as follows. Cysteine protease that generates mature viral proteins from the precursor polyprotein. In addition to its proteolytic activity, it binds to viral RNA, and thus influences viral genome replication. RNA and substrate cooperatively bind to the protease. Cleaves host PABP1, this cleavage is important for viral replication. Cleaves host TANK and disrupts the TANK-TBK1-IKKepsilon-IRF3 complex, thereby inhibiting the induction of the IFN-beta signal pathway. In terms of biological role, replicates the genomic and antigenomic RNAs by recognizing replications specific signals. Performs VPg uridylylation. This chain is Genome polyprotein, found in Cosavirus A (isolate Human/Pakistan/0553/-) (HCoSV-A).